Consider the following 142-residue polypeptide: Putative nickel-responsive regulator (142 aa).

Ni(2+)-binding residues include His-77, His-88, His-90, and Cys-96.

This sequence belongs to the transcriptional regulatory CopG/NikR family. Homotetramer. It depends on Ni(2+) as a cofactor.

Transcriptional regulator. The polypeptide is Putative nickel-responsive regulator (Halobacterium salinarum (strain ATCC 700922 / JCM 11081 / NRC-1) (Halobacterium halobium)).